Consider the following 650-residue polypeptide: Probable Xaa-Pro aminopeptidase P (650 aa).

Residues Asp447, Asp458, Glu556, and Glu570 each coordinate Mn(2+).

Belongs to the peptidase M24B family. Mn(2+) serves as cofactor.

The enzyme catalyses Release of any N-terminal amino acid, including proline, that is linked to proline, even from a dipeptide or tripeptide.. Functionally, catalyzes the removal of a penultimate prolyl residue from the N-termini of peptides. In Phaeosphaeria nodorum (strain SN15 / ATCC MYA-4574 / FGSC 10173) (Glume blotch fungus), this protein is Probable Xaa-Pro aminopeptidase P (AMPP).